Reading from the N-terminus, the 330-residue chain is Succinylglutamate desuccinylase (330 aa).

3 residues coordinate Zn(2+): His-53, Glu-56, and His-147. Glu-210 is an active-site residue.

This sequence belongs to the AspA/AstE family. Succinylglutamate desuccinylase subfamily. Requires Zn(2+) as cofactor.

It carries out the reaction N-succinyl-L-glutamate + H2O = L-glutamate + succinate. The protein operates within amino-acid degradation; L-arginine degradation via AST pathway; L-glutamate and succinate from L-arginine: step 5/5. In terms of biological role, transforms N(2)-succinylglutamate into succinate and glutamate. The chain is Succinylglutamate desuccinylase from Yersinia pseudotuberculosis serotype O:3 (strain YPIII).